A 59-amino-acid polypeptide reads, in one-letter code: MKYRESILNFIKQSKRVLRVSKKPSREEYLNVSKVTGIGIIIIGVIGFIISIIAQLLGG.

The helical transmembrane segment at 37-57 (GIGIIIIGVIGFIISIIAQLL) threads the bilayer.

Belongs to the SecE/SEC61-gamma family. Component of the Sec protein translocase complex. Heterotrimer consisting of SecY (alpha), SecG (beta) and SecE (gamma) subunits. The heterotrimers can form oligomers, although 1 heterotrimer is thought to be able to translocate proteins. Interacts with the ribosome. May interact with SecDF, and other proteins may be involved.

Its subcellular location is the cell membrane. Its function is as follows. Essential subunit of the Sec protein translocation channel SecYEG. Clamps together the 2 halves of SecY. May contact the channel plug during translocation. This chain is Protein translocase subunit SecE, found in Methanothermobacter thermautotrophicus (strain ATCC 29096 / DSM 1053 / JCM 10044 / NBRC 100330 / Delta H) (Methanobacterium thermoautotrophicum).